A 434-amino-acid polypeptide reads, in one-letter code: Glutamyl-tRNA reductase (434 aa).

Substrate contacts are provided by residues Thr52–Arg55, Ser115, Glu120–Gln122, and Gln126. Residue Cys53 is the Nucleophile of the active site. Position 195 to 200 (Gly195 to Ile200) interacts with NADP(+).

Belongs to the glutamyl-tRNA reductase family. In terms of assembly, homodimer.

It carries out the reaction (S)-4-amino-5-oxopentanoate + tRNA(Glu) + NADP(+) = L-glutamyl-tRNA(Glu) + NADPH + H(+). It participates in porphyrin-containing compound metabolism; protoporphyrin-IX biosynthesis; 5-aminolevulinate from L-glutamyl-tRNA(Glu): step 1/2. Its function is as follows. Catalyzes the NADPH-dependent reduction of glutamyl-tRNA(Glu) to glutamate 1-semialdehyde (GSA). The polypeptide is Glutamyl-tRNA reductase (Cupriavidus metallidurans (strain ATCC 43123 / DSM 2839 / NBRC 102507 / CH34) (Ralstonia metallidurans)).